The primary structure comprises 282 residues: Bis(5'-nucleosyl)-tetraphosphatase, symmetrical (282 aa).

It belongs to the Ap4A hydrolase family.

The catalysed reaction is P(1),P(4)-bis(5'-adenosyl) tetraphosphate + H2O = 2 ADP + 2 H(+). Hydrolyzes diadenosine 5',5'''-P1,P4-tetraphosphate to yield ADP. The protein is Bis(5'-nucleosyl)-tetraphosphatase, symmetrical of Salmonella agona (strain SL483).